We begin with the raw amino-acid sequence, 82 residues long: DNA-directed RNA polymerase subunit omega (82 aa).

Belongs to the RNA polymerase subunit omega family. As to quaternary structure, the RNAP catalytic core consists of 2 alpha, 1 beta, 1 beta' and 1 omega subunit. When a sigma factor is associated with the core the holoenzyme is formed, which can initiate transcription.

The catalysed reaction is RNA(n) + a ribonucleoside 5'-triphosphate = RNA(n+1) + diphosphate. Its function is as follows. Promotes RNA polymerase assembly. Latches the N- and C-terminal regions of the beta' subunit thereby facilitating its interaction with the beta and alpha subunits. This Lacticaseibacillus casei (strain BL23) (Lactobacillus casei) protein is DNA-directed RNA polymerase subunit omega.